Reading from the N-terminus, the 364-residue chain is D-alanine--D-alanine ligase (364 aa).

Residues 134–347 (RRLACINGLK…YPDLLDELIN (214 aa)) form the ATP-grasp domain. 167–222 (ASEFGWPLFVKPCSLGSSVGIHKANNMDELNAAVADALRYDEEILVEEFIVGREIE) contributes to the ATP binding site. Asp300, Glu314, and Asn316 together coordinate Mg(2+).

The protein belongs to the D-alanine--D-alanine ligase family. Mg(2+) is required as a cofactor. Mn(2+) serves as cofactor.

It localises to the cytoplasm. The catalysed reaction is 2 D-alanine + ATP = D-alanyl-D-alanine + ADP + phosphate + H(+). The protein operates within cell wall biogenesis; peptidoglycan biosynthesis. Cell wall formation. This chain is D-alanine--D-alanine ligase, found in Legionella pneumophila (strain Lens).